The following is a 246-amino-acid chain: Protein phosphatase PhpP (246 aa).

Positions 2-240 constitute a PPM-type phosphatase domain; that stretch reads EISLLTDVGQ…DNITVALVSM (239 aa). The Mn(2+) site is built by D36, G37, D192, and D231.

The protein belongs to the PP2C family. Interacts with the kinase domain of StkP. The cofactor is Mn(2+).

It is found in the cytoplasm. The enzyme catalyses O-phospho-L-seryl-[protein] + H2O = L-seryl-[protein] + phosphate. It catalyses the reaction O-phospho-L-threonyl-[protein] + H2O = L-threonyl-[protein] + phosphate. Its activity is regulated as follows. Phosphatase activity is inhibited by NaF but not by okadaic acid. Protein phosphatase able to dephosphorylate StkP-P and a phosphothreonine residue in a phosphopeptide synthetic substrate. PhpP and its cognate protein kinase StkP appear to constitute a functional signaling couple in vivo, PhpP's primary role probably being to control phosphorylation levels of StkP and of its targets (which include LocZ, DivIVA and KhpB (also called EloR/Jag)). PhpP thus performs an essential control of StkP activity. Overexpression confers an stkP deletion-like phenotype. The sequence is that of Protein phosphatase PhpP (phpP) from Streptococcus pneumoniae.